Reading from the N-terminus, the 344-residue chain is Dihydroorotase (344 aa).

Zn(2+)-binding residues include His13 and His15. Substrate-binding positions include 15–17 (HLR) and Asn41. The Zn(2+) site is built by Lys99, His136, and His174. At Lys99 the chain carries N6-carboxylysine. His136 contacts substrate. Leu219 contacts substrate. A Zn(2+)-binding site is contributed by Asp247. Asp247 is a catalytic residue. 2 residues coordinate substrate: His251 and Ala263.

Belongs to the metallo-dependent hydrolases superfamily. DHOase family. Class II DHOase subfamily. As to quaternary structure, homodimer. Zn(2+) is required as a cofactor.

It carries out the reaction (S)-dihydroorotate + H2O = N-carbamoyl-L-aspartate + H(+). The protein operates within pyrimidine metabolism; UMP biosynthesis via de novo pathway; (S)-dihydroorotate from bicarbonate: step 3/3. Functionally, catalyzes the reversible cyclization of carbamoyl aspartate to dihydroorotate. The sequence is that of Dihydroorotase from Idiomarina loihiensis (strain ATCC BAA-735 / DSM 15497 / L2-TR).